The sequence spans 860 residues: DNA mismatch repair protein MutS (860 aa).

Residue G618–S625 coordinates ATP.

This sequence belongs to the DNA mismatch repair MutS family.

Functionally, this protein is involved in the repair of mismatches in DNA. It is possible that it carries out the mismatch recognition step. This protein has a weak ATPase activity. This chain is DNA mismatch repair protein MutS, found in Shewanella piezotolerans (strain WP3 / JCM 13877).